The sequence spans 214 residues: Cytochrome c biogenesis ATP-binding export protein CcmA (214 aa).

The region spanning 12-214 is the ABC transporter domain; it reads LAAHALAFSR…TRMLTLEAAA (203 aa). 44 to 51 contacts ATP; the sequence is GDNGAGKT.

The protein belongs to the ABC transporter superfamily. CcmA exporter (TC 3.A.1.107) family. In terms of assembly, the complex is composed of two ATP-binding proteins (CcmA) and two transmembrane proteins (CcmB).

The protein localises to the cell inner membrane. It catalyses the reaction heme b(in) + ATP + H2O = heme b(out) + ADP + phosphate + H(+). In terms of biological role, part of the ABC transporter complex CcmAB involved in the biogenesis of c-type cytochromes; once thought to export heme, this seems not to be the case, but its exact role is uncertain. Responsible for energy coupling to the transport system. The protein is Cytochrome c biogenesis ATP-binding export protein CcmA of Xanthomonas oryzae pv. oryzae (strain MAFF 311018).